The chain runs to 318 residues: Acetyl-coenzyme A carboxylase carboxyl transferase subunit alpha (318 aa).

One can recognise a CoA carboxyltransferase C-terminal domain in the interval 39–297 (RLEKRSQTAL…SEALKAMVGK (259 aa)).

The protein belongs to the AccA family. In terms of assembly, acetyl-CoA carboxylase is a heterohexamer composed of biotin carboxyl carrier protein (AccB), biotin carboxylase (AccC) and two subunits each of ACCase subunit alpha (AccA) and ACCase subunit beta (AccD).

It is found in the cytoplasm. It catalyses the reaction N(6)-carboxybiotinyl-L-lysyl-[protein] + acetyl-CoA = N(6)-biotinyl-L-lysyl-[protein] + malonyl-CoA. Its pathway is lipid metabolism; malonyl-CoA biosynthesis; malonyl-CoA from acetyl-CoA: step 1/1. Functionally, component of the acetyl coenzyme A carboxylase (ACC) complex. First, biotin carboxylase catalyzes the carboxylation of biotin on its carrier protein (BCCP) and then the CO(2) group is transferred by the carboxyltransferase to acetyl-CoA to form malonyl-CoA. This Bartonella tribocorum (strain CIP 105476 / IBS 506) protein is Acetyl-coenzyme A carboxylase carboxyl transferase subunit alpha.